Consider the following 116-residue polypeptide: U16-barytoxin-Tl1d (116 aa).

Positions Met1–Ala20 are cleaved as a signal peptide. A propeptide spanning residues Asn21 to Arg74 is cleaved from the precursor. Cystine bridges form between Cys75/Cys90, Cys82/Cys95, and Cys89/Cys110.

Belongs to the neurotoxin 14 (magi-1) family. 06 (ICK-Trit) subfamily. In terms of tissue distribution, expressed by the venom gland.

It is found in the secreted. Functionally, ion channel inhibitor. In Trittame loki (Brush-footed trapdoor spider), this protein is U16-barytoxin-Tl1d.